The sequence spans 140 residues: Oocyte zinc finger protein XlCOF15 (140 aa).

5 C2H2-type zinc fingers span residues 6-28 (FTCKECSKSFSSNSHLSRHQKIH), 34-56 (FTCTECDKKFLTRSSLLLHQKVH), 62-84 (FICTECGKGFSAKSQLHRHHVIH), 90-112 (FTCAECGKTFSYKQSLVTHRAAH), and 118-140 (FICTECGKSFSHKNNLQTHLKSH).

Belongs to the krueppel C2H2-type zinc-finger protein family.

It localises to the nucleus. In terms of biological role, may be involved in transcriptional regulation. The sequence is that of Oocyte zinc finger protein XlCOF15 from Xenopus laevis (African clawed frog).